Consider the following 895-residue polypeptide: Microsomal triglyceride transfer protein large subunit (895 aa).

Residues 1-18 (MILLAVLFLCFFSSYSAS) form the signal peptide. The 632-residue stretch at 28–659 (LNNERLYKLT…VFQYLGKAGL (632 aa)) folds into the Vitellogenin domain. A disulfide bridge links Cys-174 with Cys-194.

Heterodimer; heterodimerizes with the protein disulfide isomerase (P4HB/PDI). Interacts with APOB. Interacts with PRAP1.

It localises to the endoplasmic reticulum. The protein resides in the golgi apparatus. The catalysed reaction is a 1,2-diacyl-sn-glycero-3-phosphocholine(in) = a 1,2-diacyl-sn-glycero-3-phosphocholine(out). The enzyme catalyses a 1,2-diacyl-sn-glycero-3-phosphoethanolamine(in) = a 1,2-diacyl-sn-glycero-3-phosphoethanolamine(out). It carries out the reaction a cholesterol ester(in) = a cholesterol ester(out). It catalyses the reaction a triacyl-sn-glycerol(in) = a triacyl-sn-glycerol(out). In terms of biological role, catalyzes the transport of triglyceride, cholesteryl ester, and phospholipid between phospholipid surfaces. Required for the assembly and secretion of plasma lipoproteins that contain apolipoprotein B. May be involved in regulating cholesteryl ester biosynthesis in cells that produce lipoproteins. This is Microsomal triglyceride transfer protein large subunit (MTTP) from Mesocricetus auratus (Golden hamster).